The following is a 512-amino-acid chain: MSQNKLAALIILDGFAIRDEVKGNAVKQANTPNFDRFWNQYAHNQLEASGKAVGLPDGQMGNSEVGHLNIGAGRIVYQSLTRVNVSIDEGDFYEVDAFIKSVEHAKKHDKALHLFGLLSDGGVHSHINHLFALLRLAKKHELENVFVHAFLDGRDVGPKTASKYIKETQDVMDELGVGQFATISGRYYSMDRDKRWDRVKKCYDAMVYGEGPSYKSAQEVVDDNYANEIYDEFVIPSVITDDNDEPVATIKDEDSIIFYNFRPDRAIQISRTFANEDFRDFERGDKAPKKLDFVMLTNFSETVDGYVAYQPVNLDNTVGEVLAQNNLNQLRIAETEKYPHVTFFMSGGREKEFPGEKRILIDSPKVATYDLKPEMSVYEVTDALLKELDKGEQNAIILNFANPDMVGHSGKLQPTIDAIEAVDECLGKVIDKITELGGHAIITADHGNSDEVMTLEDKPMTAHTTNPVPVIVTKDDIELRDGGILADLSPTLLDLLNVEKPKEMTGNSLIKK.

Residues Asp-13 and Ser-63 each contribute to the Mn(2+) site. Ser-63 serves as the catalytic Phosphoserine intermediate. Residues His-124, 154 to 155 (RD), Arg-186, Arg-192, 262 to 265 (RPDR), and Lys-337 contribute to the substrate site. 5 residues coordinate Mn(2+): Asp-404, His-408, Asp-445, His-446, and His-463.

Belongs to the BPG-independent phosphoglycerate mutase family. Monomer. Requires Mn(2+) as cofactor.

It catalyses the reaction (2R)-2-phosphoglycerate = (2R)-3-phosphoglycerate. It functions in the pathway carbohydrate degradation; glycolysis; pyruvate from D-glyceraldehyde 3-phosphate: step 3/5. Essential for rapid growth and for sporulation. Catalyzes the interconversion of 2-phosphoglycerate and 3-phosphoglycerate. In Oceanobacillus iheyensis (strain DSM 14371 / CIP 107618 / JCM 11309 / KCTC 3954 / HTE831), this protein is 2,3-bisphosphoglycerate-independent phosphoglycerate mutase.